A 318-amino-acid chain; its full sequence is Isoflavone reductase (318 aa).

NADP(+) contacts are provided by residues 11–17 (GATGAIG), Arg-36, and Lys-44. Residue Lys-144 is the Proton acceptor of the active site. Arg-148 serves as a coordination point for NADP(+).

This sequence belongs to the NmrA-type oxidoreductase family. Isoflavone reductase subfamily.

The catalysed reaction is (3R)-vestitone + NADP(+) = 2'-hydroxyformononetin + NADPH + 2 H(+). Its pathway is phytoalexin biosynthesis; pterocarpan phytoalexin biosynthesis. In terms of biological role, reduces achiral isoflavones to chiral isoflavanones during the biosynthesis of chiral pterocarpan phytoalexins. The reduction product (sophrol) is a third isomer, which represents the penultimate intermediate in the synthesis of the phytoalexin (+)-pisatin, the major phytoalexin in pea. This chain is Isoflavone reductase (IFR), found in Pisum sativum (Garden pea).